A 329-amino-acid polypeptide reads, in one-letter code: Malate dehydrogenase (329 aa).

12-18 (GAAGQIG) serves as a coordination point for NAD(+). Substrate is bound by residues Arg95 and Arg101. Residues Asn108, Gln115, and 132-134 (VGN) contribute to the NAD(+) site. 2 residues coordinate substrate: Asn134 and Arg165. Catalysis depends on His190, which acts as the Proton acceptor.

The protein belongs to the LDH/MDH superfamily. MDH type 2 family.

The enzyme catalyses (S)-malate + NAD(+) = oxaloacetate + NADH + H(+). Catalyzes the reversible oxidation of malate to oxaloacetate. The chain is Malate dehydrogenase from Bordetella avium (strain 197N).